We begin with the raw amino-acid sequence, 268 residues long: Hemin import ATP-binding protein HmuV (268 aa).

The ABC transporter domain occupies 5–241 (LKAEAASFAL…ELIADVFDVA (237 aa)). Residue 37 to 44 (GPNGAGKS) participates in ATP binding.

This sequence belongs to the ABC transporter superfamily. Heme (hemin) importer (TC 3.A.1.14.5) family. The complex is composed of two ATP-binding proteins (HmuV), two transmembrane proteins (HmuU) and a solute-binding protein (HmuT).

Its subcellular location is the cell inner membrane. In terms of biological role, part of the ABC transporter complex HmuTUV involved in hemin import. Responsible for energy coupling to the transport system. This chain is Hemin import ATP-binding protein HmuV, found in Rhodopseudomonas palustris (strain ATCC BAA-98 / CGA009).